The chain runs to 301 residues: UDP-3-O-acyl-N-acetylglucosamine deacetylase (301 aa).

H81, H237, and D241 together coordinate Zn(2+). Residue H264 is the Proton donor of the active site.

It belongs to the LpxC family. Requires Zn(2+) as cofactor.

It catalyses the reaction a UDP-3-O-[(3R)-3-hydroxyacyl]-N-acetyl-alpha-D-glucosamine + H2O = a UDP-3-O-[(3R)-3-hydroxyacyl]-alpha-D-glucosamine + acetate. It functions in the pathway glycolipid biosynthesis; lipid IV(A) biosynthesis; lipid IV(A) from (3R)-3-hydroxytetradecanoyl-[acyl-carrier-protein] and UDP-N-acetyl-alpha-D-glucosamine: step 2/6. Its function is as follows. Catalyzes the hydrolysis of UDP-3-O-myristoyl-N-acetylglucosamine to form UDP-3-O-myristoylglucosamine and acetate, the committed step in lipid A biosynthesis. The chain is UDP-3-O-acyl-N-acetylglucosamine deacetylase from Leptospira interrogans serogroup Icterohaemorrhagiae serovar copenhageni (strain Fiocruz L1-130).